The primary structure comprises 270 residues: Plasmanylethanolamine desaturase 1 (270 aa).

Helical transmembrane passes span 47–67, 74–94, and 161–181; these read WCSV…LLLL, PLVI…SGLV, and ALEQ…FGTF. The Histidine box-1 motif lies at 186-190; the sequence is HKWSH. The short motif at 213–217 is the Histidine box-2 element; the sequence is HHRIH.

The protein belongs to the fatty acid desaturase CarF family.

The protein resides in the endoplasmic reticulum membrane. It carries out the reaction a 1-(1,2-saturated alkyl)-2-acyl-sn-glycero-3-phosphoethanolamine + 2 Fe(II)-[cytochrome b5] + O2 + 2 H(+) = a 1-O-(1Z-alkenyl)-2-acyl-sn-glycero-3-phosphoethanolamine + 2 Fe(III)-[cytochrome b5] + 2 H2O. The catalysed reaction is a 1-O-hexadecyl-2-acyl-sn-glycero-3-phosphoethanolamine + 2 Fe(II)-[cytochrome b5] + O2 + 2 H(+) = a 1-O-(1Z-hexadecenyl)-2-acyl-sn-glycero-3-phosphoethanolamine + 2 Fe(III)-[cytochrome b5] + 2 H2O. The enzyme catalyses a 1-O-octadecyl-2-acyl-sn-glycero-3-phosphoethanolamine + 2 Fe(II)-[cytochrome b5] + O2 + 2 H(+) = a 1-O-(1Z-octadecenyl)-2-acyl-sn-glycero-3-phosphoethanolamine + 2 Fe(III)-[cytochrome b5] + 2 H2O. It catalyses the reaction a 1-O-(9Z-octadecenyl)-2-acyl-sn-glycero-3-phosphoethanolamine + 2 Fe(II)-[cytochrome b5] + O2 + 2 H(+) = a 1-O-(1Z,9Z-octadecadienyl)-2-acyl-sn-glycero-3-phosphoethanolamine + 2 Fe(III)-[cytochrome b5] + 2 H2O. Its pathway is lipid metabolism; fatty acid metabolism. In terms of biological role, plasmanylethanolamine desaturase involved in plasmalogen biogenesis in the endoplasmic reticulum membrane. Plasmalogens are glycerophospholipids with a hydrocarbon chain linked by a vinyl ether bond at the glycerol sn-1 position, and are involved in antioxidative and signaling mechanisms. This is Plasmanylethanolamine desaturase 1 from Homo sapiens (Human).